Consider the following 417-residue polypeptide: NADH-quinone oxidoreductase subunit D (417 aa).

The protein belongs to the complex I 49 kDa subunit family. NDH-1 is composed of 14 different subunits. Subunits NuoB, C, D, E, F, and G constitute the peripheral sector of the complex.

Its subcellular location is the cell inner membrane. The enzyme catalyses a quinone + NADH + 5 H(+)(in) = a quinol + NAD(+) + 4 H(+)(out). In terms of biological role, NDH-1 shuttles electrons from NADH, via FMN and iron-sulfur (Fe-S) centers, to quinones in the respiratory chain. The immediate electron acceptor for the enzyme in this species is believed to be ubiquinone. Couples the redox reaction to proton translocation (for every two electrons transferred, four hydrogen ions are translocated across the cytoplasmic membrane), and thus conserves the redox energy in a proton gradient. This chain is NADH-quinone oxidoreductase subunit D, found in Coxiella burnetii (strain CbuG_Q212) (Coxiella burnetii (strain Q212)).